The primary structure comprises 208 residues: Ribosomal RNA small subunit methyltransferase G (208 aa).

S-adenosyl-L-methionine contacts are provided by residues Gly-76, Leu-81, 127 to 128, and Arg-142; that span reads VE.

The protein belongs to the methyltransferase superfamily. RNA methyltransferase RsmG family.

The protein resides in the cytoplasm. The enzyme catalyses guanosine(527) in 16S rRNA + S-adenosyl-L-methionine = N(7)-methylguanosine(527) in 16S rRNA + S-adenosyl-L-homocysteine. Its function is as follows. Specifically methylates the N7 position of guanine in position 527 of 16S rRNA. This chain is Ribosomal RNA small subunit methyltransferase G, found in Legionella pneumophila (strain Lens).